The following is a 279-amino-acid chain: Pantothenate synthetase (279 aa).

ATP is bound at residue 26–33 (MGNLHEGH). Catalysis depends on histidine 33, which acts as the Proton donor. Position 57 (glutamine 57) interacts with (R)-pantoate. Glutamine 57 serves as a coordination point for beta-alanine. 144–147 (GKKD) is a binding site for ATP. (R)-pantoate is bound at residue glutamine 150. Residues valine 173 and 181 to 184 (LSSR) each bind ATP.

This sequence belongs to the pantothenate synthetase family. In terms of assembly, homodimer.

Its subcellular location is the cytoplasm. It carries out the reaction (R)-pantoate + beta-alanine + ATP = (R)-pantothenate + AMP + diphosphate + H(+). It participates in cofactor biosynthesis; (R)-pantothenate biosynthesis; (R)-pantothenate from (R)-pantoate and beta-alanine: step 1/1. Functionally, catalyzes the condensation of pantoate with beta-alanine in an ATP-dependent reaction via a pantoyl-adenylate intermediate. The sequence is that of Pantothenate synthetase from Burkholderia cenocepacia (strain ATCC BAA-245 / DSM 16553 / LMG 16656 / NCTC 13227 / J2315 / CF5610) (Burkholderia cepacia (strain J2315)).